The following is a 475-amino-acid chain: uncharacterized protein (475 aa).

Residues 19–39 (IKVGVFFVAILLILTGILLTI) form a helical membrane-spanning segment. Disordered stretches follow at residues 55 to 79 (GEYH…NATS) and 330 to 350 (SSPF…PHKG). The span at 60 to 79 (LNTSPNENSTALQPDENATS) shows a compositional bias: polar residues. Over residues 336-348 (NRRHPVTGRIRPH) the composition is skewed to basic residues. His-348 contributes to the Zn(2+) binding site.

The protein in the central section; belongs to the OapA family. This sequence in the C-terminal section; belongs to the peptidase M23B family. The cofactor is Zn(2+).

It is found in the cell membrane. This is an uncharacterized protein from Haemophilus influenzae (strain ATCC 51907 / DSM 11121 / KW20 / Rd).